Here is a 356-residue protein sequence, read N- to C-terminus: Cytochrome b translation regulator cbp7 (356 aa).

Component of a complex, at least composed of cbp7 and cbp8.

The protein resides in the mitochondrion. Its function is as follows. Translation factor for cob1/cytochrome b; plays a role in cob1 mRNA stabilization and required for correct folding of the protein. The chain is Cytochrome b translation regulator cbp7 from Schizosaccharomyces pombe (strain 972 / ATCC 24843) (Fission yeast).